Reading from the N-terminus, the 206-residue chain is Thiamine-phosphate synthase (206 aa).

Residues 36–40 (QLRMK) and Asn68 contribute to the 4-amino-2-methyl-5-(diphosphooxymethyl)pyrimidine site. Residues Asp69 and Asp88 each coordinate Mg(2+). Ser106 lines the 4-amino-2-methyl-5-(diphosphooxymethyl)pyrimidine pocket. 132-134 (TNT) is a binding site for 2-[(2R,5Z)-2-carboxy-4-methylthiazol-5(2H)-ylidene]ethyl phosphate. Lys135 is a binding site for 4-amino-2-methyl-5-(diphosphooxymethyl)pyrimidine. 2-[(2R,5Z)-2-carboxy-4-methylthiazol-5(2H)-ylidene]ethyl phosphate-binding positions include Gly162 and 182 to 183 (VS).

Belongs to the thiamine-phosphate synthase family. The cofactor is Mg(2+).

The catalysed reaction is 2-[(2R,5Z)-2-carboxy-4-methylthiazol-5(2H)-ylidene]ethyl phosphate + 4-amino-2-methyl-5-(diphosphooxymethyl)pyrimidine + 2 H(+) = thiamine phosphate + CO2 + diphosphate. The enzyme catalyses 2-(2-carboxy-4-methylthiazol-5-yl)ethyl phosphate + 4-amino-2-methyl-5-(diphosphooxymethyl)pyrimidine + 2 H(+) = thiamine phosphate + CO2 + diphosphate. It catalyses the reaction 4-methyl-5-(2-phosphooxyethyl)-thiazole + 4-amino-2-methyl-5-(diphosphooxymethyl)pyrimidine + H(+) = thiamine phosphate + diphosphate. Its pathway is cofactor biosynthesis; thiamine diphosphate biosynthesis; thiamine phosphate from 4-amino-2-methyl-5-diphosphomethylpyrimidine and 4-methyl-5-(2-phosphoethyl)-thiazole: step 1/1. Condenses 4-methyl-5-(beta-hydroxyethyl)thiazole monophosphate (THZ-P) and 2-methyl-4-amino-5-hydroxymethyl pyrimidine pyrophosphate (HMP-PP) to form thiamine monophosphate (TMP). This chain is Thiamine-phosphate synthase, found in Methanococcus vannielii (strain ATCC 35089 / DSM 1224 / JCM 13029 / OCM 148 / SB).